The following is a 272-amino-acid chain: Prephenate dehydratase (272 aa).

The Prephenate dehydratase domain occupies 4 to 179; that stretch reads AVIYTLPKGT…NKTRFILIGK (176 aa). An ACT domain is found at 194-269; that stretch reads IVFELKEDKP…TFINLLGKYP (76 aa).

Homodimer.

The enzyme catalyses prephenate + H(+) = 3-phenylpyruvate + CO2 + H2O. The protein operates within amino-acid biosynthesis; L-phenylalanine biosynthesis; phenylpyruvate from prephenate: step 1/1. Inhibited by L-phenylalanine but not by L-tyrosine or L-tryptophan. The sequence is that of Prephenate dehydratase (pheA) from Methanocaldococcus jannaschii (strain ATCC 43067 / DSM 2661 / JAL-1 / JCM 10045 / NBRC 100440) (Methanococcus jannaschii).